Here is a 150-residue protein sequence, read N- to C-terminus: Urease subunit beta (150 aa).

Residues 122–140 are compositionally biased toward low complexity; the sequence is GAVVGDSPAATPGTTGATG. The segment at 122 to 150 is disordered; it reads GAVVGDSPAATPGTTGATGDLPGYLGEGS.

The protein belongs to the urease beta subunit family. Heterotrimer of UreA (gamma), UreB (beta) and UreC (alpha) subunits. Three heterotrimers associate to form the active enzyme.

The protein localises to the cytoplasm. It catalyses the reaction urea + 2 H2O + H(+) = hydrogencarbonate + 2 NH4(+). The protein operates within nitrogen metabolism; urea degradation; CO(2) and NH(3) from urea (urease route): step 1/1. The chain is Urease subunit beta from Frankia alni (strain DSM 45986 / CECT 9034 / ACN14a).